An 82-amino-acid polypeptide reads, in one-letter code: MTFPRALTVIDDNGMVINIIFWFLLIIILILLSIALLNIIKLCMVCCNLGRTVIIVPAQHAYDAYKNFMRIKAYNPDGALLA.

At M1–I19 the chain is on the virion surface side. The chain crosses the membrane as a helical span at residues I20–I40. Residues K41–A82 lie on the Intravirion side of the membrane.

This sequence belongs to the alphacoronaviruses E protein family. In terms of assembly, homopentamer. Interacts with membrane protein M in the budding compartment of the host cell, which is located between endoplasmic reticulum and the Golgi complex. Interacts with Nucleoprotein.

The protein resides in the host Golgi apparatus membrane. In terms of biological role, plays a central role in virus morphogenesis and assembly. Acts as a viroporin and self-assembles in host membranes forming pentameric protein-lipid pores that allow ion transport. Also plays a role in the induction of apoptosis. The chain is Envelope small membrane protein from Porcine transmissible gastroenteritis coronavirus (strain Purdue) (TGEV).